The primary structure comprises 425 residues: Decarboxylase flvG (425 aa).

Position 82 is an N6-(pyridoxal phosphate)lysine (K82). Pyridoxal 5'-phosphate-binding positions include S213, G250, and 281 to 284 (EPGR). A substrate-binding site is contributed by 331–332 (FE). The Proton donor; shared with dimeric partner role is filled by C365. D366 contacts substrate. Y395 lines the pyridoxal 5'-phosphate pocket.

This sequence belongs to the Orn/Lys/Arg decarboxylase class-II family. Homodimer. Only the dimer is catalytically active, as the active sites are constructed of residues from both monomers. Requires pyridoxal 5'-phosphate as cofactor.

It is found in the cytoplasm. It carries out the reaction N(6),N(6)-dimethyl-L-lysine + H(+) = N,N-dimethyl-cadaverine + CO2. Its pathway is secondary metabolite biosynthesis; terpenoid biosynthesis. Functionally, decarboxylase; part of the gene cluster that mediates the biosynthesis of flavunoidine, an alkaloidal terpenoid with a tetracyclic cage-like core connected to dimethylcadaverine via a C-N bond and acylated with 5,5-dimethyl-L-pipecolate. The tetracyclic core is synthesized by the terpene cyclase flvE and the cytochrome P450 monooxygenase flvD. The terpene cyclase flvE catalyzes the cyclization of farnesyl pyrophosphate (FPP) to form (1R,4R,5S)-(+)-acoradiene and the cytochrome P450 monooxygenase flvD is then responsible for oxidative conversion of (1R,4R,5S)-(+)-acoradiene into the tetracyclic cage present in the final product flavunoidine. In parallel, the N-methyltransferase flvH dimethylates L-lysine to give N,N-dimethyl-L-Lysin which is decarboxylated by flvG to afford dimethylcadaverine. The terpene cyclase-like protein flvF is the enzyme that attaches the dimethylcadaverine precusor at the C-7 of the tetracyclic cage to yield pre-flavunoidine. The cytochrome monooxygenase flvC hydroxylates the C-10 position of pre-flavunoidine whereas the NRPS flvI acylates the terpenoid core at the hydroxylated C-10 with dimethylpipecolate to yield final flavunoidine. The bifunctional enzyme flvA and the dehydrogenase flvB are responsible for the synthesis of the dimethylpipecolate precursor. The PLP-dependent lyase domain of flvA might use L-O-acetyl-homoserine and alpha-keto-isovalerate to form an intermediary ketone that can cyclize intramolecularly to yield an imine. The imine can be reduced by flvB to yield the 6-carboxylated pipecolate. The C-terminal alpha-KG-dependent oxygenase domain of flvA is then proposed to catalyze the decarboxylation to yield dimethylpipecolate. The polypeptide is Decarboxylase flvG (Aspergillus flavus (strain ATCC 200026 / FGSC A1120 / IAM 13836 / NRRL 3357 / JCM 12722 / SRRC 167)).